A 600-amino-acid polypeptide reads, in one-letter code: Elongation factor 4 (600 aa).

Positions 6–188 (KLIRNFSIIA…AVVERIPAPK (183 aa)) constitute a tr-type G domain. GTP-binding positions include 18-23 (DHGKST) and 135-138 (NKID).

This sequence belongs to the TRAFAC class translation factor GTPase superfamily. Classic translation factor GTPase family. LepA subfamily.

Its subcellular location is the cell inner membrane. The catalysed reaction is GTP + H2O = GDP + phosphate + H(+). Its function is as follows. Required for accurate and efficient protein synthesis under certain stress conditions. May act as a fidelity factor of the translation reaction, by catalyzing a one-codon backward translocation of tRNAs on improperly translocated ribosomes. Back-translocation proceeds from a post-translocation (POST) complex to a pre-translocation (PRE) complex, thus giving elongation factor G a second chance to translocate the tRNAs correctly. Binds to ribosomes in a GTP-dependent manner. This Sorangium cellulosum (strain So ce56) (Polyangium cellulosum (strain So ce56)) protein is Elongation factor 4.